The primary structure comprises 385 residues: Enoyl-[acyl-carrier-protein] reductase, mitochondrial (385 aa).

The active-site Proton donor is Tyr-78. NADP(+) is bound by residues Asn-162, 190–193 (TSGV), 213–215 (RDR), 288–291 (YGGM), 313–315 (YWV), and Lys-378.

It belongs to the zinc-containing alcohol dehydrogenase family. Quinone oxidoreductase subfamily. Homodimer.

It localises to the mitochondrion matrix. The catalysed reaction is a 2,3-saturated acyl-[ACP] + NADP(+) = a (2E)-enoyl-[ACP] + NADPH + H(+). Functionally, catalyzes the NADPH-dependent reduction of trans-2-enoyl thioesters in mitochondrial fatty acid synthesis (fatty acid synthesis type II). Fatty acid chain elongation in mitochondria uses acyl carrier protein (ACP) as an acyl group carrier, but the enzyme accepts both ACP and CoA thioesters as substrates in vitro. Required for respiration and the maintenance of the mitochondrial compartment. This chain is Enoyl-[acyl-carrier-protein] reductase, mitochondrial (ETR1), found in Candida glabrata (strain ATCC 2001 / BCRC 20586 / JCM 3761 / NBRC 0622 / NRRL Y-65 / CBS 138) (Yeast).